Reading from the N-terminus, the 306-residue chain is Agmatinase (306 aa).

His-126, Asp-149, His-151, Asp-153, Asp-230, and Asp-232 together coordinate Mn(2+).

It belongs to the arginase family. Agmatinase subfamily. Mn(2+) serves as cofactor.

The catalysed reaction is agmatine + H2O = urea + putrescine. It functions in the pathway amine and polyamine biosynthesis; putrescine biosynthesis via agmatine pathway; putrescine from agmatine: step 1/1. Functionally, catalyzes the formation of putrescine from agmatine. This chain is Agmatinase, found in Salmonella agona (strain SL483).